We begin with the raw amino-acid sequence, 885 residues long: Conidiophore development regulator abaA (885 aa).

The span at 1 to 20 (MSSLFQPRPVLSSQRYSQSP) shows a compositional bias: polar residues. Positions 1-25 (MSSLFQPRPVLSSQRYSQSPDYVDT) are disordered. Residues 124–217 (QKDKGGVWRR…QVVKKFFEDL (94 aa)) constitute a DNA-binding region (TEA). 2 disordered regions span residues 502 to 539 (KEKR…WTRR) and 817 to 885 (APGS…TAGW). Composition is skewed to basic and acidic residues over residues 508-521 (YADG…ERAG) and 831-840 (VESHAGDHHG).

It belongs to the TEC1 family.

The protein localises to the nucleus. Functionally, brlA, abaA and wetA are pivotal regulators of conidiophore development and conidium maturation. They act individually and together to regulate their own expression and that of numerous other sporulation-specific genes. BrlA, abaA and wetA act together to positively regulate the expression of the Pks1 gene cluster that mediates the biosynthesis of an anthraquinone derivative pigment that contributes to conidial pigmentation that provides protection from UV radiation, heat and cold stress. In Metarhizium robertsii (strain ARSEF 23 / ATCC MYA-3075) (Metarhizium anisopliae (strain ARSEF 23)), this protein is Conidiophore development regulator abaA.